The sequence spans 70 residues: Large ribosomal subunit protein uL29 (70 aa).

This sequence belongs to the universal ribosomal protein uL29 family.

This chain is Large ribosomal subunit protein uL29, found in Prochlorococcus marinus (strain NATL1A).